The chain runs to 297 residues: N-acetylneuraminate lyase (297 aa).

Ser-47 and Thr-48 together coordinate aceneuramate. Tyr-137 functions as the Proton donor in the catalytic mechanism. The Schiff-base intermediate with substrate role is filled by Lys-165. 5 residues coordinate aceneuramate: Thr-167, Gly-189, Asp-191, Glu-192, and Ser-208.

The protein belongs to the DapA family. NanA subfamily. In terms of assembly, homotetramer.

The protein resides in the cytoplasm. The catalysed reaction is aceneuramate = aldehydo-N-acetyl-D-mannosamine + pyruvate. It functions in the pathway amino-sugar metabolism; N-acetylneuraminate degradation; D-fructose 6-phosphate from N-acetylneuraminate: step 1/5. Its function is as follows. Catalyzes the reversible aldol cleavage of N-acetylneuraminic acid (sialic acid; Neu5Ac) to form pyruvate and N-acetylmannosamine (ManNAc) via a Schiff base intermediate. This chain is N-acetylneuraminate lyase, found in Enterobacter sp. (strain 638).